The sequence spans 376 residues: MHIVADENIPLLDEFFAAFGSIRRLPGRGISAADVRDADLLLVRSVTQVNRALLEGSRVRFVGTCTIGTDHLDLDYFAEAGIAWSSAPGCNARGVVDYVLGSVLTLAEREGVDPAARVYGVVGAGQVGGRLVHLLRGLGWQVRVCDPPRQAAEGGDFVSLERIIEECDVISLHTPLDASTRHLFDATRLAALQPGAWLINASRGAVVDNAALRTLLPQRPDLKVVLDVWEGEPQADVELAALCQLATPHIAGYSLDGKLRGTAQIYQACCRVLGLPEQVSLDELLPAPWLSEMSIDSSADPAWVLASLCRAVYDPRRDDADFRRSLVGDADARRAAFDRLRKHYPMRREIDGLRVRIQGDAPQLAALVRALGAATT.

Positions 45 and 66 each coordinate substrate. Residues 126–127 (QV), D146, T174, 201–203 (ASR), and D227 contribute to the NAD(+) site. Residue R203 is part of the active site. The active site involves E232. Residue H249 is the Proton donor of the active site. G252 provides a ligand contact to NAD(+). Y253 is a binding site for substrate.

The protein belongs to the D-isomer specific 2-hydroxyacid dehydrogenase family. PdxB subfamily. As to quaternary structure, homodimer.

It localises to the cytoplasm. The catalysed reaction is 4-phospho-D-erythronate + NAD(+) = (R)-3-hydroxy-2-oxo-4-phosphooxybutanoate + NADH + H(+). It functions in the pathway cofactor biosynthesis; pyridoxine 5'-phosphate biosynthesis; pyridoxine 5'-phosphate from D-erythrose 4-phosphate: step 2/5. Catalyzes the oxidation of erythronate-4-phosphate to 3-hydroxy-2-oxo-4-phosphonooxybutanoate. This is Erythronate-4-phosphate dehydrogenase from Ectopseudomonas mendocina (strain ymp) (Pseudomonas mendocina).